The sequence spans 150 residues: Viral late gene transcription factor 2 (150 aa).

The protein belongs to the orthopoxvirus VLTF-2/OPG126 family. Interacts with itself. Interacts with the late transcription factors VLTF-1/OPG093.

In terms of biological role, acts with RNA polymerase to initiate transcription from late gene promoters. The sequence is that of Viral late gene transcription factor 2 (OPG126) from Vaccinia virus (strain Copenhagen) (VACV).